The chain runs to 84 residues: Small ribosomal subunit protein bS16 (84 aa).

The protein belongs to the bacterial ribosomal protein bS16 family.

The sequence is that of Small ribosomal subunit protein bS16 from Endomicrobium trichonymphae.